Here is a 237-residue protein sequence, read N- to C-terminus: Carbonyl reductase family member 4 (237 aa).

Residues 11-14 (SRGI), 34-35 (RN), Asp57, and 84-86 (AAG) each bind NADP(+). Ser135 is a binding site for substrate. NADP(+) contacts are provided by residues Tyr148, Lys152, and 181-183 (IHT). The active-site Proton acceptor is the Tyr148.

Belongs to the short-chain dehydrogenases/reductases (SDR) family. As to quaternary structure, homotetramer (in vitro). Heterotetramer with HSD17B8; contains two molecules each of HSD17B8 and CBR4.

It is found in the mitochondrion matrix. The protein operates within lipid metabolism; fatty acid biosynthesis. The heterotetramer with HSD17B8 has NADH-dependent 3-ketoacyl-acyl carrier protein reductase activity, and thereby plays a role in mitochondrial fatty acid biosynthesis. Within the heterotetramer, HSD17B8 binds NADH; CBR4 binds NADPD. The homotetramer has NADPH-dependent quinone reductase activity. Both homotetramer and the heterotetramer have broad in vitro substrate specificity and can reduce 9,10-phenanthrenequinone, 1,4-benzoquinone and various other o-quinones and p-quinones. The sequence is that of Carbonyl reductase family member 4 (cbr4) from Danio rerio (Zebrafish).